A 429-amino-acid chain; its full sequence is Enolase (429 aa).

Residue Q167 participates in (2R)-2-phosphoglycerate binding. Residue E209 is the Proton donor of the active site. Residues D246, E289, and D316 each contribute to the Mg(2+) site. (2R)-2-phosphoglycerate-binding residues include K341, R370, S371, and K392. The active-site Proton acceptor is K341.

The protein belongs to the enolase family. Component of the RNA degradosome, a multiprotein complex involved in RNA processing and mRNA degradation. It depends on Mg(2+) as a cofactor.

It localises to the cytoplasm. The protein localises to the secreted. It is found in the cell surface. It carries out the reaction (2R)-2-phosphoglycerate = phosphoenolpyruvate + H2O. It functions in the pathway carbohydrate degradation; glycolysis; pyruvate from D-glyceraldehyde 3-phosphate: step 4/5. Its function is as follows. Catalyzes the reversible conversion of 2-phosphoglycerate (2-PG) into phosphoenolpyruvate (PEP). It is essential for the degradation of carbohydrates via glycolysis. This is Enolase from Cellvibrio japonicus (strain Ueda107) (Pseudomonas fluorescens subsp. cellulosa).